The chain runs to 340 residues: Erythroferrone (340 aa).

The signal sequence occupies residues 1 to 24 (MASTRRPVGARTLLACASLLAAMG). Disordered stretches follow at residues 30 to 63 (SAEP…IAHA), 79 to 112 (SDKG…GPPG), and 141 to 161 (HCTR…PAAQ). Positions 40–58 (PQPPGAELPAPPANSPPEP) are enriched in pro residues. Residues 84 to 95 (NSKRRSKARRLK) show a composition bias toward basic residues. A hydroxyproline mark is found at Pro99, Pro101, Pro102, Pro104, Pro105, and Pro107. Over residues 99-112 (PGPPGPPGPQGPPG) the composition is skewed to pro residues. Residues 145–154 (DLTTPASGSP) are compositionally biased toward polar residues. The C1q domain maps to 185 to 340 (APRVEAAFHC…SHFSAILLGL (156 aa)). Asn229, Asn281, Asn292, and Asn319 each carry an N-linked (GlcNAc...) asparagine glycan.

The protein belongs to the adipolin/erythroferrone family. In terms of assembly, homodimer; disulfide-linked. Forms trimer, hexamers and higher molecular weight oligomers. May form heteromeric complexes with C1QTNF2 and C1QTNF12 and, to a lesser extent, with C1QTNF5 and C1QTNF10. Interacts with BMP5 and BMP7; the interaction inhibits BMP-induced transcription of HAMP. Interacts with BMP6; the interaction inhibits BMP-induced transcription of HAMP. Interacts with BMP2. Interacts with heterodimers composed of BMP2 and BMP6 in vitro, the interaction inhibits the heterodimer binding to its receptor BMPR1A /ALK3 and thereby suppresses expression of HAMP. In terms of processing, N-glycosylated; required for secretion of the mature protein. As to expression, expressed in the soleus muscle in the leg (at protein level). Found in blood (at protein level). Weakly expressed in the heart (at protein level). Predominantly expressed in skeletal muscle and, at much lower levels, in other tissues, including lung, eye, smooth muscle, brain and kidney. Within skeletal muscles, higher expression levels in soleus as compared with plantaris. Expressed in osteoblasts, mature osteoclasts and erythroblasts. When fasting, females tend to have higher circulating levels than males. Obese mice tend to have lower expression and circulating levels as compared to lean animals. Following EPO treatment, only expressed in bone marrow and spleen.

The protein localises to the secreted. Its function is as follows. Iron-regulatory hormone that acts as an erythroid regulator after hemorrhage: produced by erythroblasts following blood loss and mediates suppression of hepcidin (HAMP) expression in the liver, thereby promoting increased iron absorption and mobilization from stores. Promotes lipid uptake into adipocytes and hepatocytes via transcriptional up-regulation of genes involved in fatty acid uptake. Inhibits apoptosis and inflammatory response in cardiomyocytes via promotion of sphingosine-1-phosphate (S1P) and cAMP-dependent activation of AKT signaling. Inhibits autophagy induced by nutrient deficiency in hepatocytes via promoting the phosphorylation of IRS1, AKT, and MTOR, and thereby subsequent activation of the AKT-MTOR signaling pathway. Negatively regulates the differentiation of osteoblasts, potentially via sequestering BMP2, and thereby inhibits the activation of SMAD signaling. The reduction in BMP2 signaling in osteoblasts also results in an increase in expression of the osteoclastogenesis-promoting factors TNFSF11/RANKL and SOST, thereby indirectly promotes bone resorption. This chain is Erythroferrone, found in Mus musculus (Mouse).